We begin with the raw amino-acid sequence, 210 residues long: Thymidylate kinase (210 aa).

11 to 18 contributes to the ATP binding site; sequence GVDGAGKT.

The protein belongs to the thymidylate kinase family.

It catalyses the reaction dTMP + ATP = dTDP + ADP. In terms of biological role, phosphorylation of dTMP to form dTDP in both de novo and salvage pathways of dTTP synthesis. In Mycoplasma pneumoniae (strain ATCC 29342 / M129 / Subtype 1) (Mycoplasmoides pneumoniae), this protein is Thymidylate kinase (tmk).